The primary structure comprises 94 residues: MSLKMFVNEKFIEDWCRETGEQVDHQLVCTVGEKSKEKICLLERTCSLEGLSTVLMSENFKDTLEEELKDCDSHLDRAANDSPSLSCILGNAND.

This is an uncharacterized protein from Schizosaccharomyces pombe (strain 972 / ATCC 24843) (Fission yeast).